The sequence spans 1599 residues: MFEAKVKKQIKSIQFGLFSPDEVRNGSVALIVHPEVMEGGVPKTGGLIDLRMGTTDRMYLCQSCGGDNFSCPGHFGHIELTKPMFHVGYISKIKKVLECVCFYCSKIKIPRKGIKSTLSNVWGMSKGRSVCEGEVLDNGRSGCGNKQPVIKREGLTLVAFMKGEESNEGKVMLNGERVYSIFKKISDEDSVYMGFDLKYSRPEWMILTVLLVPPPAVRPSIVMEGSLRGEDDLTHKLADIIKSNGYLKKYEQEGAPGHIVRDYEQLLQFHVATFIDNDIGGLPQALQKSGRPLKSLSARLKGKEGRIRGNLMGKRVDFSARTVITPDPNISLEEVGVPLEIAKIHTFPEKVTSFNIDRLEKLVRAGPNEHPGANYVLRSDGQKIDLNFNRSDIRLEEGYVVERHMQSGDVVLFNRQPSLHKMSMMAHYARVMGNKTFRLNLSVTSPYNADFDGDEMNLHMPQSYTSKAELEELALVSRQIISPQSNKPVMGIVQDTLTGLRLFTLRDTFLNEREVMSLLYAVNLEFCDIPLGDAVQTGLRKGKDYDIMKILRKPAIAKPMRLWTGKQVLSFVLPNLNYIGLSSEHDDDDKENIGDTRVIIQDGYIHSGVIDKKAAGATQGGLVHIIFNDFGPKRAAQFFDGVQRMINAFMTGIHTFSMGIGDTIADPKTVKVVESAIRKAKEEVSALIENARQNRLERLPGMTMKESFESHLNLVLNRARDVSGTSAQRSLSENNNMKTMVLAGSKGSFINISQVTACVGQQNVEGKRIPFGFSHRTLPHFVKDDYTGKSRGFVENSYLTGLDPEEFFFHAMGGREGLIDTAIKTAETGYIQRRLVKALEDAIVRQDESVRSGNGLVYQIKYGEDGFDATFLESQKVDVKNFTKRYYIDMFGTEELEIKHGQVSEEVYGMLSSDVDLQKLLDQEYEWLVGEIFEGPPILSVGEVDIERDYKVRDIYQSAVMSPCNFTRILATAKRTFHLSTGDVSPYYILEAHKHLTTSNRILNVLIRTNLSVKRVLLEHRLNTEAFNWVVEVIDAKILKAKITPNEMVGTLAAQSVGEPATQMTLNTFHLAGVASTVTMGVPRLKEIFNVTKNLKTPSMKIYLDREHGKSIEAAKTIQNEIECLTVKDLCLFSEIYYDPEITGTEISDDKDFVEAYFEFPDEDVDFSCLSPFLMRLVVDRAKLVGRGINLEYVAMFIRKELGGGAHVICSDENAVNMVVRVRTTKSEDESLNFYTTALNSLLRLQLGGYKNVKKVYISEDKDRKEWYLQTDGICLSQILGNPAVNSRLTISNDLVEIAETLGIEAARESILRELTIVIDGNGSYVNYRHMSLLADVMTMRGYLCGITRHGVNKVGAGALKRSSFEETVEILLDAALVSEKNICRGITENIMMGQLAPMGTGNIEIMLDMKKLDKAIPLSNPVFKPNEPATPVISTPSSDSFSISSGNWSPTHLEMAYSRDLGERLSPTSPSYSPTSPSYSPTSPSYSPTSPSYSPTSPSYSPTSPSYSPTSPSYSPTSPSYSPTSPSYSPTSPSYSPTSPSYSPTSPSYSPTSPSYSPTSPSYSPTSPSYSVSMSSFSNKNKSKNQDGDKKRRNDGSF.

Zn(2+)-binding residues include C61, C64, C71, H74, C101, C104, C131, and C143. Mg(2+) contacts are provided by D450, D452, and D454. Residues 804–816 form a bridging helix region; the sequence is PEEFFFHAMGGRE. 2 disordered regions span residues 1424-1446 and 1464-1599; these read FKPN…SISS and ERLS…DGSF. 2 stretches are compositionally biased toward low complexity: residues 1435–1446 and 1467–1581; these read STPSSDSFSISS and SPTS…FSNK. 14 repeat units span residues 1473–1479, 1480–1486, 1487–1493, 1494–1500, 1501–1507, 1508–1514, 1515–1521, 1522–1528, 1529–1535, 1536–1542, 1543–1549, 1550–1556, 1557–1563, and 1564–1570. Positions 1473-1570 are C-terminal domain (CTD); 14 X 7 AA approximate tandem repeats of Y-S-P-[TS]-S-P-S; that stretch reads YSPTSPSYSP…SPSYSPTSPS (98 aa). Residues 1585–1599 show a composition bias toward basic and acidic residues; the sequence is KNQDGDKKRRNDGSF.

Belongs to the RNA polymerase beta' chain family. In terms of assembly, component of the RNA polymerase II (Pol II) complex consisting of 12 subunits. Post-translationally, the tandem 7 residues repeats in the C-terminal domain (CTD) can be highly phosphorylated. The phosphorylation activates Pol II. Phosphorylation occurs mainly at residues 'Ser-2' and 'Ser-5' of the heptapeptide repeat. The phosphorylation state is believed to result from the balanced action of site-specific CTD kinases and phosphatase, and a 'CTD code' that specifies the position of Pol II within the transcription cycle has been proposed.

The protein resides in the nucleus. The enzyme catalyses RNA(n) + a ribonucleoside 5'-triphosphate = RNA(n+1) + diphosphate. DNA-dependent RNA polymerase catalyzes the transcription of DNA into RNA using the four ribonucleoside triphosphates as substrates. Largest and catalytic component of RNA polymerase II which synthesizes mRNA precursors and many functional non-coding RNAs. Forms the polymerase active center together with the second largest subunit. Pol II is the central component of the basal RNA polymerase II transcription machinery. It is composed of mobile elements that move relative to each other. RPB1 is part of the core element with the central large cleft, the clamp element that moves to open and close the cleft and the jaws that are thought to grab the incoming DNA template. At the start of transcription, a single-stranded DNA template strand of the promoter is positioned within the central active site cleft of Pol II. A bridging helix emanates from RPB1 and crosses the cleft near the catalytic site and is thought to promote translocation of Pol II by acting as a ratchet that moves the RNA-DNA hybrid through the active site by switching from straight to bent conformations at each step of nucleotide addition. During transcription elongation, Pol II moves on the template as the transcript elongates. Elongation is influenced by the phosphorylation status of the C-terminal domain (CTD) of Pol II largest subunit (RPB1), which serves as a platform for assembly of factors that regulate transcription initiation, elongation, termination and mRNA processing. The chain is DNA-directed RNA polymerase II subunit RPB1 (RPB1) from Encephalitozoon cuniculi (strain GB-M1) (Microsporidian parasite).